A 358-amino-acid polypeptide reads, in one-letter code: 3-isopropylmalate dehydrogenase (358 aa).

Substrate is bound by residues R92, R102, R130, and D224. Mg(2+) is bound by residues D224, D248, and D252. Residue G282–N294 coordinates NAD(+).

This sequence belongs to the isocitrate and isopropylmalate dehydrogenases family. LeuB type 1 subfamily. As to quaternary structure, homodimer. It depends on Mg(2+) as a cofactor. Requires Mn(2+) as cofactor.

It is found in the cytoplasm. The enzyme catalyses (2R,3S)-3-isopropylmalate + NAD(+) = 4-methyl-2-oxopentanoate + CO2 + NADH. It participates in amino-acid biosynthesis; L-leucine biosynthesis; L-leucine from 3-methyl-2-oxobutanoate: step 3/4. Functionally, catalyzes the oxidation of 3-carboxy-2-hydroxy-4-methylpentanoate (3-isopropylmalate) to 3-carboxy-4-methyl-2-oxopentanoate. The product decarboxylates to 4-methyl-2 oxopentanoate. The chain is 3-isopropylmalate dehydrogenase from Bordetella parapertussis (strain 12822 / ATCC BAA-587 / NCTC 13253).